The primary structure comprises 446 residues: 23S rRNA (uracil(1939)-C(5))-methyltransferase RlmD (446 aa).

The 59-residue stretch at 6–64 (KKLPQESITCEIESLSHEGRGVSHKDGKTLFVEGALPGETVTARYVNSRRSYDELAVEE) folds into the TRAM domain. 4 residues coordinate [4Fe-4S] cluster: cysteine 77, cysteine 83, cysteine 86, and cysteine 165. 6 residues coordinate S-adenosyl-L-methionine: glutamine 275, phenylalanine 304, asparagine 309, glutamate 325, aspartate 352, and aspartate 377. Cysteine 403 serves as the catalytic Nucleophile.

Belongs to the class I-like SAM-binding methyltransferase superfamily. RNA M5U methyltransferase family. RlmD subfamily.

It catalyses the reaction uridine(1939) in 23S rRNA + S-adenosyl-L-methionine = 5-methyluridine(1939) in 23S rRNA + S-adenosyl-L-homocysteine + H(+). Functionally, catalyzes the formation of 5-methyl-uridine at position 1939 (m5U1939) in 23S rRNA. The sequence is that of 23S rRNA (uracil(1939)-C(5))-methyltransferase RlmD from Hahella chejuensis (strain KCTC 2396).